Here is a 258-residue protein sequence, read N- to C-terminus: Tryptophan synthase alpha chain (258 aa).

Catalysis depends on proton acceptor residues E52 and D63.

It belongs to the TrpA family. As to quaternary structure, tetramer of two alpha and two beta chains.

It catalyses the reaction (1S,2R)-1-C-(indol-3-yl)glycerol 3-phosphate + L-serine = D-glyceraldehyde 3-phosphate + L-tryptophan + H2O. The protein operates within amino-acid biosynthesis; L-tryptophan biosynthesis; L-tryptophan from chorismate: step 5/5. Functionally, the alpha subunit is responsible for the aldol cleavage of indoleglycerol phosphate to indole and glyceraldehyde 3-phosphate. This Streptococcus pneumoniae serotype 4 (strain ATCC BAA-334 / TIGR4) protein is Tryptophan synthase alpha chain.